The primary structure comprises 192 residues: Fe/S biogenesis protein NfuA (192 aa).

C149 and C152 together coordinate [4Fe-4S] cluster.

This sequence belongs to the NfuA family. Homodimer. [4Fe-4S] cluster serves as cofactor.

Its function is as follows. Involved in iron-sulfur cluster biogenesis. Binds a 4Fe-4S cluster, can transfer this cluster to apoproteins, and thereby intervenes in the maturation of Fe/S proteins. Could also act as a scaffold/chaperone for damaged Fe/S proteins. The polypeptide is Fe/S biogenesis protein NfuA (Shewanella piezotolerans (strain WP3 / JCM 13877)).